Here is a 349-residue protein sequence, read N- to C-terminus: Xylitol-binding protein (349 aa).

Positions 1–22 (MNITSKIGAIAAAGAVGLGLTA) are cleaved as a signal peptide. Residue C23 is the site of N-palmitoyl cysteine attachment. Residue C23 is the site of S-diacylglycerol cysteine attachment. Xylitol-binding residues include Y42, N121, R173, N224, D249, and Q269.

This sequence belongs to the bacterial solute-binding protein 2 family.

It is found in the cell membrane. In terms of biological role, part of an ABC transporter complex likely involved in xylitol import. Binds xylitol. The sequence is that of Xylitol-binding protein from Mycolicibacterium smegmatis (strain ATCC 700084 / mc(2)155) (Mycobacterium smegmatis).